The sequence spans 620 residues: Cilia- and flagella-associated protein 52 (620 aa).

WD repeat units follow at residues 62–106, 109–150, 156–195, 288–327, 330–369, 372–411, 415–454, 459–498, 500–541, 543–582, and 585–620; these read GHGN…LIAR, LHKG…AICG, LNVGNATSVVFSRCRDEMFVTAGNGTIRVWELDLPNRKIW, QLQGGITSITLRGEGHQFFVGTEESHIYRVNFTDFKETLI, CHFEAVQDIVFPFGTAELFATCAKKDIRVWHTMSKRELLR, VPNMTCHGIDFMRDGKSIISAWDDGKIRAFAPESGRLMYT, AHRIGVTAIATTSDCKRIISGGGEGEVRVWQVGCQTQKLE, EHKSSVSCIRVKKNNEECVTASTDGTCIIWDLVRLRRNQM, LANT…RELE, SLSGSINGMDITQEGGHFVTGGHDHLVKVWDYNEGEVTHV, and GHSGNIMAMRISPGNQYIVSVSADGAILRWKYPFAS.

Belongs to the CFAP52 family. As to quaternary structure, microtubule inner protein component of sperm flagellar doublet microtubules. Interacts with BRCA2. Interacts with the CCT chaperonin complex. Interacts with HSP70. Interacts with AK8. Interacts with CFAP45. Interacts with DNAI1. Interacts with IQDC.

Its subcellular location is the cytoplasm. The protein resides in the cytoskeleton. The protein localises to the cilium axoneme. It localises to the flagellum axoneme. Its function is as follows. Microtubule inner protein (MIP) part of the dynein-decorated doublet microtubules (DMTs) in cilia axoneme. Important for proper ciliary and flagellar beating. May act in cooperation with CFAP45 and axonemal dynein subunit DNAH11. May play a role in cell growth and/or survival. This Mus musculus (Mouse) protein is Cilia- and flagella-associated protein 52.